A 157-amino-acid polypeptide reads, in one-letter code: DNA gyrase inhibitor 2 (157 aa).

It belongs to the DNA gyrase inhibitor family. Interacts with DNA gyrase.

The protein localises to the cytoplasm. Its function is as follows. Inhibits the supercoiling activity of DNA gyrase. Acts by inhibiting DNA gyrase at an early step, prior to (or at the step of) binding of DNA by the gyrase. It protects cells against toxins that target DNA gyrase, by inhibiting activity of these toxins and reducing the formation of lethal double-strand breaks in the cell. The sequence is that of DNA gyrase inhibitor 2 from Dickeya dadantii (strain 3937) (Erwinia chrysanthemi (strain 3937)).